We begin with the raw amino-acid sequence, 238 residues long: Large ribosomal subunit protein uL2 (238 aa).

Residues 200–238 (HGGGLHQSVSRPSTVSRNAPPGRKVGHIAARRTGRKEGK) form a disordered region. Positions 206–216 (QSVSRPSTVSR) are enriched in polar residues. Residues 223–238 (KVGHIAARRTGRKEGK) are compositionally biased toward basic residues.

It belongs to the universal ribosomal protein uL2 family. Part of the 50S ribosomal subunit. Forms a bridge to the 30S subunit in the 70S ribosome.

In terms of biological role, one of the primary rRNA binding proteins. Required for association of the 30S and 50S subunits to form the 70S ribosome, for tRNA binding and peptide bond formation. It has been suggested to have peptidyltransferase activity; this is somewhat controversial. Makes several contacts with the 16S rRNA in the 70S ribosome. The sequence is that of Large ribosomal subunit protein uL2 from Saccharolobus islandicus (strain Y.N.15.51 / Yellowstone #2) (Sulfolobus islandicus).